The chain runs to 442 residues: tRNA-2-methylthio-N(6)-dimethylallyladenosine synthase (442 aa).

Residues 3–120 form the MTTase N-terminal domain; it reads NKLYIRTFGC…LPNMLNDALN (118 aa). Residues C12, C49, C83, C157, C161, and C164 each contribute to the [4Fe-4S] cluster site. A Radical SAM core domain is found at 143 to 375; that stretch reads RTNSVTAFVS…QKTINNNTEH (233 aa). Residues 378 to 440 enclose the TRAM domain; sequence QLMIGSIQKV…GNSLMGDLLT (63 aa).

The protein belongs to the methylthiotransferase family. MiaB subfamily. In terms of assembly, monomer. The cofactor is [4Fe-4S] cluster.

It is found in the cytoplasm. It carries out the reaction N(6)-dimethylallyladenosine(37) in tRNA + (sulfur carrier)-SH + AH2 + 2 S-adenosyl-L-methionine = 2-methylsulfanyl-N(6)-dimethylallyladenosine(37) in tRNA + (sulfur carrier)-H + 5'-deoxyadenosine + L-methionine + A + S-adenosyl-L-homocysteine + 2 H(+). Functionally, catalyzes the methylthiolation of N6-(dimethylallyl)adenosine (i(6)A), leading to the formation of 2-methylthio-N6-(dimethylallyl)adenosine (ms(2)i(6)A) at position 37 in tRNAs that read codons beginning with uridine. The chain is tRNA-2-methylthio-N(6)-dimethylallyladenosine synthase from Vesicomyosocius okutanii subsp. Calyptogena okutanii (strain HA).